A 118-amino-acid chain; its full sequence is Small ribosomal subunit protein mS37 (118 aa).

The CHCH domain occupies 42–84; it reads EATCITEMSVMMACWKQNEFRDDACRKEIQGFLDCAARAQEAR. 2 consecutive short sequence motifs (cx9C motif) follow at residues 45 to 55 and 66 to 76; these read CITEMSVMMAC and CRKEIQGFLDC. 2 cysteine pairs are disulfide-bonded: C45-C76 and C55-C66.

It belongs to the mitochondrion-specific ribosomal protein mS37 family. As to quaternary structure, component of the mitochondrial small ribosomal subunit (mt-SSU). Mature mammalian 55S mitochondrial ribosomes consist of a small (28S) and a large (39S) subunit. The 28S small subunit contains a 12S ribosomal RNA (12S mt-rRNA) and 30 different proteins. The 39S large subunit contains a 16S rRNA (16S mt-rRNA), a copy of mitochondrial valine transfer RNA (mt-tRNA(Val)), which plays an integral structural role, and 52 different proteins.

It is found in the mitochondrion. It localises to the nucleus. This chain is Small ribosomal subunit protein mS37 (CHCHD1), found in Homo sapiens (Human).